Reading from the N-terminus, the 422-residue chain is uncharacterized protein (422 aa).

3 positions are modified to phosphoserine: Ser124, Ser126, and Ser151. The disordered stretch occupies residues 144-166 (TNSLNHDSPPSTPPRRPDTSTSK). Residue Lys250 forms a Glycyl lysine isopeptide (Lys-Gly) (interchain with G-Cter in SUMO2) linkage. Disordered stretches follow at residues 251–285 (ADTTTGSKPTGVFSRLGATPETDEDLAWDSDNDSS) and 299–324 (GRGPAKASPQPALTVKAKATSSATTA). Residues 271-282 (ETDEDLAWDSDN) show a composition bias toward acidic residues. Ser280 and Ser306 each carry phosphoserine. The span at 310 to 324 (ALTVKAKATSSATTA) shows a compositional bias: low complexity. Ser351 carries the phosphoserine modification.

This is an uncharacterized protein from Homo sapiens (Human).